Consider the following 154-residue polypeptide: Myoglobin (154 aa).

The Globin domain occupies 2 to 148 (GLSDGEWQLV…FRHDMAAKYK (147 aa)). Phosphoserine is present on Ser-4. A nitrite-binding site is contributed by His-65. His-65 is an O2 binding site. Thr-68 carries the phosphothreonine modification. His-94 is a binding site for heme b.

The protein belongs to the globin family. Monomeric.

The protein localises to the cytoplasm. It is found in the sarcoplasm. The enzyme catalyses Fe(III)-heme b-[protein] + nitric oxide + H2O = Fe(II)-heme b-[protein] + nitrite + 2 H(+). It carries out the reaction H2O2 + AH2 = A + 2 H2O. In terms of biological role, monomeric heme protein which primary function is to store oxygen and facilitate its diffusion within muscle tissues. Reversibly binds oxygen through a pentacoordinated heme iron and enables its timely and efficient release as needed during periods of heightened demand. Depending on the oxidative conditions of tissues and cells, and in addition to its ability to bind oxygen, it also has a nitrite reductase activity whereby it regulates the production of bioactive nitric oxide. Under stress conditions, like hypoxia and anoxia, it also protects cells against reactive oxygen species thanks to its pseudoperoxidase activity. The sequence is that of Myoglobin (MB) from Osphranter rufus (Red kangaroo).